The chain runs to 214 residues: MSAVTQHHADELARGADELGVALDADKQRQLLAYLALLIKWNKAYNLTAVRDPDEMVSRHLLDSLSIVPYAEAGDNWLDVGSGGGMPGVPLAILFPEKRLTLLDSNGKKTRFLTQVKLELKLANLEVVHSRVEAFRPESPFDGIVSRAFSSLEDFANWTRHLGGQETRWLAMKGVHPNEELAALPEDFRVEAEHALAVPGCQGQRHLLILRCTA.

Residues G81, M86, 132–133 (VE), and R147 contribute to the S-adenosyl-L-methionine site.

The protein belongs to the methyltransferase superfamily. RNA methyltransferase RsmG family.

The protein resides in the cytoplasm. It catalyses the reaction guanosine(527) in 16S rRNA + S-adenosyl-L-methionine = N(7)-methylguanosine(527) in 16S rRNA + S-adenosyl-L-homocysteine. In terms of biological role, specifically methylates the N7 position of guanine in position 527 of 16S rRNA. The protein is Ribosomal RNA small subunit methyltransferase G of Pseudomonas aeruginosa (strain UCBPP-PA14).